Consider the following 165-residue polypeptide: Keratin-associated protein 5-7 (165 aa).

Tandem repeats lie at residues 35-38, 41-44, 47-50, 116-119, 126-129, 145-148, and 155-158. Residues 35–158 form a 7 X 4 AA repeats of C-C-X-P region; that stretch reads CCVPVCCCKP…CCSQSSCCVP (124 aa).

This sequence belongs to the KRTAP type 5 family. In terms of assembly, interacts with hair keratins. As to expression, expressed in hair root but not in skin.

Functionally, in the hair cortex, hair keratin intermediate filaments are embedded in an interfilamentous matrix, consisting of hair keratin-associated protein (KRTAP), which are essential for the formation of a rigid and resistant hair shaft through their extensive disulfide bond cross-linking with abundant cysteine residues of hair keratins. The matrix proteins include the high-sulfur and high-glycine-tyrosine keratins. In Homo sapiens (Human), this protein is Keratin-associated protein 5-7 (KRTAP5-7).